Consider the following 638-residue polypeptide: Threonine--tRNA ligase (638 aa).

One can recognise a TGS domain in the interval 1–61 (MPIITLPDGT…DYDAEIKIIT (61 aa)). The catalytic stretch occupies residues 242–533 (DHRKIGKKMD…LIENYAGNFP (292 aa)). 3 residues coordinate Zn(2+): Cys333, His384, and His510.

It belongs to the class-II aminoacyl-tRNA synthetase family. Homodimer. Zn(2+) serves as cofactor.

The protein resides in the cytoplasm. The enzyme catalyses tRNA(Thr) + L-threonine + ATP = L-threonyl-tRNA(Thr) + AMP + diphosphate + H(+). In terms of biological role, catalyzes the attachment of threonine to tRNA(Thr) in a two-step reaction: L-threonine is first activated by ATP to form Thr-AMP and then transferred to the acceptor end of tRNA(Thr). Also edits incorrectly charged L-seryl-tRNA(Thr). This chain is Threonine--tRNA ligase, found in Prochlorococcus marinus (strain MIT 9211).